A 35-amino-acid polypeptide reads, in one-letter code: Cytochrome b6-f complex subunit 5 (35 aa).

Residues 5 to 25 (LLCGIVLGLIPVTLTGLFVAA) form a helical membrane-spanning segment.

This sequence belongs to the PetG family. In terms of assembly, the 4 large subunits of the cytochrome b6-f complex are cytochrome b6, subunit IV (17 kDa polypeptide, PetD), cytochrome f and the Rieske protein, while the 4 small subunits are PetG, PetL, PetM and PetN. The complex functions as a dimer.

Its subcellular location is the plastid. The protein localises to the organellar chromatophore thylakoid membrane. Functionally, component of the cytochrome b6-f complex, which mediates electron transfer between photosystem II (PSII) and photosystem I (PSI), cyclic electron flow around PSI, and state transitions. PetG is required for either the stability or assembly of the cytochrome b6-f complex. The sequence is that of Cytochrome b6-f complex subunit 5 from Paulinella chromatophora.